The chain runs to 405 residues: Probable tRNA sulfurtransferase (405 aa).

Positions 60–165 constitute a THUMP domain; that stretch reads TAVMDRLKGV…LNGVFLSGQT (106 aa). Residues 183–184, 208–209, R265, G287, and Q296 contribute to the ATP site; these read ML and HF.

This sequence belongs to the ThiI family.

The protein resides in the cytoplasm. The enzyme catalyses [ThiI sulfur-carrier protein]-S-sulfanyl-L-cysteine + a uridine in tRNA + 2 reduced [2Fe-2S]-[ferredoxin] + ATP + H(+) = [ThiI sulfur-carrier protein]-L-cysteine + a 4-thiouridine in tRNA + 2 oxidized [2Fe-2S]-[ferredoxin] + AMP + diphosphate. It catalyses the reaction [ThiS sulfur-carrier protein]-C-terminal Gly-Gly-AMP + S-sulfanyl-L-cysteinyl-[cysteine desulfurase] + AH2 = [ThiS sulfur-carrier protein]-C-terminal-Gly-aminoethanethioate + L-cysteinyl-[cysteine desulfurase] + A + AMP + 2 H(+). The protein operates within cofactor biosynthesis; thiamine diphosphate biosynthesis. Functionally, catalyzes the ATP-dependent transfer of a sulfur to tRNA to produce 4-thiouridine in position 8 of tRNAs, which functions as a near-UV photosensor. Also catalyzes the transfer of sulfur to the sulfur carrier protein ThiS, forming ThiS-thiocarboxylate. This is a step in the synthesis of thiazole, in the thiamine biosynthesis pathway. The sulfur is donated as persulfide by IscS. The chain is Probable tRNA sulfurtransferase from Levilactobacillus brevis (strain ATCC 367 / BCRC 12310 / CIP 105137 / JCM 1170 / LMG 11437 / NCIMB 947 / NCTC 947) (Lactobacillus brevis).